Here is an 873-residue protein sequence, read N- to C-terminus: Alanine--tRNA ligase (873 aa).

Residues His-562, His-566, Cys-666, and His-670 each contribute to the Zn(2+) site.

The protein belongs to the class-II aminoacyl-tRNA synthetase family. The cofactor is Zn(2+).

It localises to the cytoplasm. The catalysed reaction is tRNA(Ala) + L-alanine + ATP = L-alanyl-tRNA(Ala) + AMP + diphosphate. In terms of biological role, catalyzes the attachment of alanine to tRNA(Ala) in a two-step reaction: alanine is first activated by ATP to form Ala-AMP and then transferred to the acceptor end of tRNA(Ala). Also edits incorrectly charged Ser-tRNA(Ala) and Gly-tRNA(Ala) via its editing domain. The chain is Alanine--tRNA ligase from Dichelobacter nodosus (strain VCS1703A).